A 1711-amino-acid chain; its full sequence is Nuclear pore complex protein Nup214 (1711 aa).

Repeat copies occupy residues 472–473 (FG), 486–487 (FG), 497–498 (FG), 511–512 (FG), 514–515 (FG), 535–536 (FG), 588–589 (TS), and 598–599 (SL). Positions 472 to 1703 (FGAAAAKAPA…NSNAQKPAFG (1232 aa)) are 45 X 2 AA repeats of F-G. 2 leucine-zipper regions span residues 650–672 (LDDL…VQGL) and 767–788 (LTRL…KSKL). The segment at 886-905 (KPATANKYTQAAVAPPSPPD) is disordered. Repeat 9 spans residues 1009-1010 (FG). Positions 1012–1081 (GSPAVAAPTP…NKSFGFGGFT (70 aa)) are disordered. Basic and acidic residues-rich tracts occupy residues 1037–1051 (TKPK…KEFK) and 1058–1072 (EESK…ETEN). Residues 1044–1711 (AAESKEFKAV…FGGSSFMNYR (668 aa)) are interaction with emb. Tandem repeats lie at residues 1075–1076 (FG), 1077–1078 (FG), 1097–1098 (FG), 1106–1107 (FG), 1135–1136 (FG), 1218–1219 (FG), 1229–1230 (FG), and 1240–1241 (FG). Polar residues predominate over residues 1251–1261 (TSVTEANNKTD). Residues 1251-1270 (TSVTEANNKTDPISTTPSAI) form a disordered region. 27 tandem repeats follow at residues 1356-1357 (FG), 1388-1389 (FG), 1399-1400 (FG), 1434-1435 (FG), 1449-1450 (FG), 1458-1459 (FG), 1472-1473 (FG), 1481-1482 (FG), 1487-1488 (FG), 1507-1508 (FG), 1512-1513 (FG), 1539-1540 (FG), 1547-1548 (FG), 1562-1563 (FG), 1571-1572 (FG), 1584-1585 (FG), 1588-1589 (FG), 1601-1602 (FG), 1617-1618 (FG), 1623-1624 (FG), 1629-1630 (FG), 1635-1636 (FG), 1641-1642 (FG), 1647-1648 (FG), 1650-1651 (FG), 1662-1663 (FG), and 1686-1687 (FG). 2 disordered regions span residues 1533 to 1552 (SPQA…SPAT) and 1557 to 1614 (SGGS…TTTP). 2 stretches are compositionally biased toward gly residues: residues 1560 to 1572 (SIFG…GGFG) and 1582 to 1595 (GGFG…GGGS). Positions 1596 to 1614 (VAQTGFGSPQAPQQQTTTP) are enriched in low complexity. The segment covering 1688-1698 (NLAQTGNSNAQ) has biased composition (polar residues). The disordered stretch occupies residues 1688–1711 (NLAQTGNSNAQKPAFGGSSFMNYR). The stretch at 1702–1703 (FG) is repeat 45.

In terms of assembly, component of the nuclear pore complex. Interacts with mbo/Nup88 and (via C-terminus) with emb to attenuate emb-mediated protein export.

It localises to the nucleus. It is found in the nuclear pore complex. The protein resides in the nucleus membrane. In terms of biological role, part of the nuclear pore complex. Serves as a docking site in the receptor-mediated import of substrates across the nuclear pore complex including emb, RanGAP and phosphorylated Mad. Protects mbo/Nup88 from proteasomal degradation at the nuclear pore. Together with mbo/Nup88, sequesters emb in the cytoplasm and thereby attenuates nuclear export signal (NES)-mediated nuclear export. Together with mbo/Nup88, required for the nuclear import of the Rel family transcription factors dorsal (dl) and Dorsal-related immunity factor (Dif) and the activation of an immune response. The sequence is that of Nuclear pore complex protein Nup214 from Drosophila melanogaster (Fruit fly).